Consider the following 302-residue polypeptide: Hydra actinoporin-like toxin 4 (302 aa).

The first 17 residues, 1 to 17 (MLLFKLIVCFFFIFAIG), serve as a signal peptide directing secretion. The tract at residues 22–93 (KKDETSGENE…PAPKQTTTKK (72 aa)) is disordered. A compositionally biased stretch (low complexity) spans 60–75 (KPPAAKPPAASKITKP). Residues 76–86 (QVPPQKKPPAP) show a composition bias toward pro residues. A Cell attachment site motif is present at residues 274–276 (KAG).

The protein belongs to the actinoporin family. HALT subfamily. As to quaternary structure, octamer or nonamer in membranes. Monomer in the soluble state. In vitro, interacts with folate receptor alpha (of target organism).

Its subcellular location is the nematocyst. The protein resides in the secreted. It is found in the target cell membrane. In terms of biological role, pore-forming protein that forms hydrophilic pores and causes cytolysis. Compared to equinatoxin-2 (AC P61914), it reveals lower cytolysis activity (5-12-fold difference, tested on erythrocytes), a larger pore size (probably 2-3 nm) and different affinity to membrane lipids (100-fold lower affinity to sphingomyelin). Binds to sulfatides. Shows cytolytic activity on HeLa cells, with a different potency than its paralogs (from most potent to less potent: HALT-4&gt;HALT-6~HALT-1&gt;HALT-3&gt;HALT-7&gt;HALT-2). This recombinant protein has the highest cytolytic activity compared to other rHALT proteins, probably due to its longer N-terminal sequence that may penetrate the lipid bilayer more effectively. Pore formation is a multi-step process that involves specific recognition of membrane lipid by a protein aromatic residues rich region, firm binding to the membrane (mainly driven by hydrophobic interactions) accompanied by the transfer of the N-terminal region to the lipid-water interface and finally pore formation after oligomerization of monomers. In vitro, binds to the folate receptor alpha (FOLR1), a GPI-anchored membrane protein that plays a major role in the uptake of folate/folic acid into cells via endocytosis, suggesting a possible involvement of this receptor in the mechanism of HALT-1-induced cell lysis. In vivo, does not cause visible paralysis in larvae of the blowfly Sarcophaga faculata, the most common arthropod prey of Hydra. The protein is Hydra actinoporin-like toxin 4 of Hydra vulgaris (Hydra).